A 215-amino-acid chain; its full sequence is Probable transaldolase (215 aa).

The Schiff-base intermediate with substrate role is filled by K83.

This sequence belongs to the transaldolase family. Type 3B subfamily.

The protein resides in the cytoplasm. The catalysed reaction is D-sedoheptulose 7-phosphate + D-glyceraldehyde 3-phosphate = D-erythrose 4-phosphate + beta-D-fructose 6-phosphate. Its pathway is carbohydrate degradation; pentose phosphate pathway; D-glyceraldehyde 3-phosphate and beta-D-fructose 6-phosphate from D-ribose 5-phosphate and D-xylulose 5-phosphate (non-oxidative stage): step 2/3. Functionally, transaldolase is important for the balance of metabolites in the pentose-phosphate pathway. The polypeptide is Probable transaldolase (Methanococcus maripaludis (strain DSM 14266 / JCM 13030 / NBRC 101832 / S2 / LL)).